The sequence spans 377 residues: Protein RecA (377 aa).

Residue 66–73 coordinates ATP; the sequence is GPESSGKT. A disordered region spans residues 329-377; sequence VGVRPEEPTAEPGADAAVTSAAAATDDTAKTVSAPAAKTTKSKAAAAKS. Residues 342-377 show a composition bias toward low complexity; the sequence is ADAAVTSAAAATDDTAKTVSAPAAKTTKSKAAAAKS.

It belongs to the RecA family.

It is found in the cytoplasm. Its function is as follows. Can catalyze the hydrolysis of ATP in the presence of single-stranded DNA, the ATP-dependent uptake of single-stranded DNA by duplex DNA, and the ATP-dependent hybridization of homologous single-stranded DNAs. It interacts with LexA causing its activation and leading to its autocatalytic cleavage. This is Protein RecA from Streptomyces avermitilis (strain ATCC 31267 / DSM 46492 / JCM 5070 / NBRC 14893 / NCIMB 12804 / NRRL 8165 / MA-4680).